The primary structure comprises 39 residues: Photosystem II reaction center protein L (39 aa).

The chain crosses the membrane as a helical span at residues 18–38 (SLYLGLLVVFTTGILFSSYFF).

It belongs to the PsbL family. In terms of assembly, PSII is composed of 1 copy each of membrane proteins PsbA, PsbB, PsbC, PsbD, PsbE, PsbF, PsbH, PsbI, PsbJ, PsbK, PsbL, PsbM, PsbT, PsbX, PsbY, PsbZ, Psb30/Ycf12, peripheral proteins PsbO, CyanoQ (PsbQ), PsbU, PsbV and a large number of cofactors. It forms dimeric complexes.

The protein resides in the cellular thylakoid membrane. Functionally, one of the components of the core complex of photosystem II (PSII). PSII is a light-driven water:plastoquinone oxidoreductase that uses light energy to abstract electrons from H(2)O, generating O(2) and a proton gradient subsequently used for ATP formation. It consists of a core antenna complex that captures photons, and an electron transfer chain that converts photonic excitation into a charge separation. This subunit is found at the monomer-monomer interface and is required for correct PSII assembly and/or dimerization. The chain is Photosystem II reaction center protein L from Synechococcus sp. (strain WH7803).